We begin with the raw amino-acid sequence, 387 residues long: Peroxisomal membrane protein LPX1 (387 aa).

The tract at residues 385–387 (QKL) is peroxisomal targeting signal type 1.

It localises to the peroxisome matrix. In terms of biological role, has acyl esterase, lipase and phospholipase A activity. The sequence is that of Peroxisomal membrane protein LPX1 (LPX1) from Saccharomyces cerevisiae (strain ATCC 204508 / S288c) (Baker's yeast).